We begin with the raw amino-acid sequence, 599 residues long: Endoribonuclease ZC3H12A (599 aa).

The tract at residues 1-40 is disordered; that stretch reads MSGPCGEKPVLEASPTMSLWEFEDSHSRQGTPRPGQELAA. Residues 42 to 87 form a ubiquitin association domain region; it reads EASALELQMKVDFFRKLGYSSTEIHSVLQKLGVQADTNTVLGELVK. A necessary for interaction with TANK region spans residues 81–150; the sequence is VLGELVKHGT…DGSNVAMSHG (70 aa). A disordered region spans residues 90-133; the sequence is TATERERQTSPDPCPQLPLVPRGGGTPKAPNLEPPLPEEEKEGS. A Phosphoserine modification is found at S99. The segment at 112–297 is RNase; sequence GGGTPKAPNL…LDNFLRKKPL (186 aa). The RNase NYN domain occupies 135 to 290; sequence LRPVVIDGSN…LGRHGPSLDN (156 aa). An RNA binding region spans residues 214-220; that stretch reads RRVGGKR. Position 226 (D226) interacts with Mg(2+). Residues 301 to 324 form a C3H1-type zinc finger; the sequence is HRKQPCPYGRKCTYGIKCRFFHPE. The segment at 301-457 is necessary for interaction with ZC3H12D; that stretch reads HRKQPCPYGR…SELWGVRGGG (157 aa). Residues 343 to 420 are disordered; that stretch reads LSPPRAPSKD…SGSSFGPTDW (78 aa). S344 is modified (phosphoserine). Residues 358-375 show a composition bias toward low complexity; the sequence is PSPSSQSSSLLTESEQCS. The span at 386 to 399 shows a compositional bias: polar residues; it reads SPGSRQEGLTQTYA. Phosphoserine occurs at positions 438 and 442. Positions 522-546 are disordered; sequence PPPTSVLQEPPVQSPGAGRSPWGRA.

This sequence belongs to the ZC3H12 family. Oligomer. Found in a deubiquitination complex with TANK, USP10 and ZC3H12A; this complex inhibits genotoxic stress- or interleukin-1-beta-mediated NF-kappaB activation by promoting IKBKG or TRAF6 deubiquitination. Interacts with IKBKG; this interaction increases in response to DNA damage. Interacts with TANK; this interaction increases in response to DNA damage and serves as a bridge to anchor both TANK and USP10 into a deubiquitinating complex. Interacts with TRAF6; this interaction increases in response to DNA damage and is stimulated by TANK. Interacts with USP10; this interaction increases in response to DNA damage and serves as a bridge to anchor both TANK and USP10 into a deubiquitinating complex. Interacts with ZC3H12D. Interacts with TNRC6A. Interacts with IKBKB/IKKB. Interacts with IKBKB/IKKB. Interacts with BTRC; the interaction occurs when ZC3H12A is phosphorylated in a IKBKB/IKKB-dependent manner. Interacts with IRAK1; this interaction increases the interaction between ZC3H12A and IKBKB/IKKB. Interacts with UPF1; this interaction occurs in a mRNA translationally active- and termination-dependent manner and is essential for ZC3H12A-mediated degradation of target mRNAs. Associates with ribosomes. Interacts with ubiquitin. As to quaternary structure, (Microbial infection) Oligomerization is necessary for antiviral activity. It depends on Mg(2+) as a cofactor. In terms of processing, phosphorylated by IRAK1; phosphorylation is necessary for subsequent phosphorylation by the I-kappa-B-kinase (IKK) complex. Phosphorylated by I-kappa-B-kinase (IKK) subunits IKBKB/IKKB and CHUK/IKKA at Ser-438 and Ser-442; these phosphorylations promote ubiquitin proteasome-mediated degradation of ZC3H12A and hence facilitates rapid and robust production of IL-6 mRNA in response to toll-like receptor (TLR) or IL-1 receptor stimuli. Post-translationally, (Microbial infection) Rapidly degraded in activated T-cells in response to phorbol 13-acetate 12-myristate (PMA) during HIV-1 viral infection. Ubiquitinated; ubiquitination is induced in response to interleukin IL1 receptor stimuli in a IKBKB/IKKB and IRAK1-dependent manner, leading to proteasome-mediated degradation. In terms of processing, proteolytically cleaved between Arg-111 and Arg-214 by MALT1 in activated T-cells; cleavage at Arg-111 is critical for promoting ZC3H12A degradation in response to T-cell receptor (TCR) stimulation, and hence is necessary for prolonging the stability of a set of mRNAs controlling T-cell activation and Th17 cell differentiation. Expressed in heart, placenta, spleen, kidney, liver and lung. Expressed in leukocytes. Expressed in monocyte.

The protein localises to the nucleus. It localises to the cytoplasm. It is found in the P-body. Its subcellular location is the rough endoplasmic reticulum membrane. The protein resides in the cytoplasmic granule. In terms of biological role, endoribonuclease involved in various biological functions such as cellular inflammatory response and immune homeostasis, glial differentiation of neuroprogenitor cells, cell death of cardiomyocytes, adipogenesis and angiogenesis. Functions as an endoribonuclease involved in mRNA decay. Modulates the inflammatory response by promoting the degradation of a set of translationally active cytokine-induced inflammation-related mRNAs, such as IL6 and IL12B, during the early phase of inflammation. Prevents aberrant T-cell-mediated immune reaction by degradation of multiple mRNAs controlling T-cell activation, such as those encoding cytokines (IL6 and IL2), cell surface receptors (ICOS, TNFRSF4 and TNFR2) and transcription factor (REL). Inhibits cooperatively with ZC3H12A the differentiation of helper T cells Th17 in lungs. They repress target mRNA encoding the Th17 cell-promoting factors IL6, ICOS, REL, IRF4, NFKBID and NFKBIZ. The cooperation requires RNA-binding by RC3H1 and the nuclease activity of ZC3H12A. Together with RC3H1, destabilizes TNFRSF4/OX40 mRNA by binding to the conserved stem loop structure in its 3'UTR. Self regulates by destabilizing its own mRNA. Cleaves mRNA harboring a stem-loop (SL), often located in their 3'-UTRs, during the early phase of inflammation in a helicase UPF1-dependent manner. Plays a role in the inhibition of microRNAs (miRNAs) biogenesis. Cleaves the terminal loop of a set of precursor miRNAs (pre-miRNAs) important for the regulation of the inflammatory response leading to their degradation, and thus preventing the biosynthesis of mature miRNAs. Also plays a role in promoting angiogenesis in response to inflammatory cytokines by inhibiting the production of antiangiogenic microRNAs via its anti-dicer RNase activity. Affects the overall ubiquitination of cellular proteins. Positively regulates deubiquitinase activity promoting the cleavage at 'Lys-48'- and 'Lys-63'-linked polyubiquitin chains on TNF receptor-associated factors (TRAFs), preventing JNK and NF-kappa-B signaling pathway activation, and hence negatively regulating macrophage-mediated inflammatory response and immune homeostasis. Also induces deubiquitination of the transcription factor HIF1A, probably leading to its stabilization and nuclear import, thereby positively regulating the expression of proangiogenic HIF1A-targeted genes. Involved in a TANK-dependent negative feedback response to attenuate NF-kappaB activation through the deubiquitination of IKBKG or TRAF6 in response to interleukin-1-beta (IL1B) stimulation or upon DNA damage. Prevents stress granule (SGs) formation and promotes macrophage apoptosis under stress conditions, including arsenite-induced oxidative stress, heat shock and energy deprivation. Plays a role in the regulation of macrophage polarization; promotes IL4-induced polarization of macrophages M1 into anti-inflammatory M2 state. May also act as a transcription factor that regulates the expression of multiple genes involved in inflammatory response, angiogenesis, adipogenesis and apoptosis. Functions as a positive regulator of glial differentiation of neuroprogenitor cells through an amyloid precursor protein (APP)-dependent signaling pathway. Attenuates septic myocardial contractile dysfunction in response to lipopolysaccharide (LPS) by reducing I-kappa-B-kinase (IKK)-mediated NF-kappa-B activation, and hence myocardial pro-inflammatory cytokine production. Its function is as follows. (Microbial infection) Binds to Japanese encephalitis virus (JEV) and Dengue virus (DEN) RNAs. Functionally, (Microbial infection) Exhibits antiviral activity against HIV-1 in lymphocytes by decreasing the abundance of HIV-1 viral RNA species. The polypeptide is Endoribonuclease ZC3H12A (Homo sapiens (Human)).